A 379-amino-acid polypeptide reads, in one-letter code: Alcohol dehydrogenase 1 (379 aa).

Cys-47, Thr-49, His-69, Cys-99, Cys-102, Cys-105, Cys-113, and Cys-177 together coordinate Zn(2+). An alcohol-binding residues include Thr-49 and His-69. Thr-49 is an NAD(+) binding site. Residues 202-207 (GLGAVG), Asp-226, Arg-231, Thr-272, Val-295, 295-297 (VGV), Phe-322, and Arg-372 contribute to the NAD(+) site.

It belongs to the zinc-containing alcohol dehydrogenase family. As to quaternary structure, homodimer. Zn(2+) serves as cofactor.

It is found in the cytoplasm. It catalyses the reaction a primary alcohol + NAD(+) = an aldehyde + NADH + H(+). The enzyme catalyses a secondary alcohol + NAD(+) = a ketone + NADH + H(+). This chain is Alcohol dehydrogenase 1 (ADH1), found in Zea mays (Maize).